A 358-amino-acid chain; its full sequence is Extracellular phospholipase C (358 aa).

It localises to the secreted. The sequence is that of Extracellular phospholipase C (plcA) from Dickeya chrysanthemi (Pectobacterium chrysanthemi).